We begin with the raw amino-acid sequence, 704 residues long: Elongation factor G (704 aa).

The region spanning 8-291 (ANVRNIGIMA…AVIEYLPSPV (284 aa)) is the tr-type G domain. GTP contacts are provided by residues 17–24 (AHIDAGKT), 90–94 (DTPGH), and 144–147 (NKMD).

It belongs to the TRAFAC class translation factor GTPase superfamily. Classic translation factor GTPase family. EF-G/EF-2 subfamily.

The protein resides in the cytoplasm. Its function is as follows. Catalyzes the GTP-dependent ribosomal translocation step during translation elongation. During this step, the ribosome changes from the pre-translocational (PRE) to the post-translocational (POST) state as the newly formed A-site-bound peptidyl-tRNA and P-site-bound deacylated tRNA move to the P and E sites, respectively. Catalyzes the coordinated movement of the two tRNA molecules, the mRNA and conformational changes in the ribosome. This Chlorobium phaeobacteroides (strain BS1) protein is Elongation factor G.